The following is a 124-amino-acid chain: Holo-[acyl-carrier-protein] synthase (124 aa).

Positions 8 and 56 each coordinate Mg(2+).

Belongs to the P-Pant transferase superfamily. AcpS family. Mg(2+) serves as cofactor.

Its subcellular location is the cytoplasm. It catalyses the reaction apo-[ACP] + CoA = holo-[ACP] + adenosine 3',5'-bisphosphate + H(+). Its function is as follows. Transfers the 4'-phosphopantetheine moiety from coenzyme A to a Ser of acyl-carrier-protein. The chain is Holo-[acyl-carrier-protein] synthase from Nitratidesulfovibrio vulgaris (strain ATCC 29579 / DSM 644 / CCUG 34227 / NCIMB 8303 / VKM B-1760 / Hildenborough) (Desulfovibrio vulgaris).